A 126-amino-acid chain; its full sequence is Ribosome-binding factor A (126 aa).

The protein belongs to the RbfA family. In terms of assembly, monomer. Binds 30S ribosomal subunits, but not 50S ribosomal subunits or 70S ribosomes.

It localises to the cytoplasm. Functionally, one of several proteins that assist in the late maturation steps of the functional core of the 30S ribosomal subunit. Associates with free 30S ribosomal subunits (but not with 30S subunits that are part of 70S ribosomes or polysomes). Required for efficient processing of 16S rRNA. May interact with the 5'-terminal helix region of 16S rRNA. The chain is Ribosome-binding factor A from Azoarcus sp. (strain BH72).